The sequence spans 499 residues: Serine/threonine-protein kinase RHS3 (499 aa).

The interval 1-92 (MLLKPGNKLV…NSSKPHTGGD (92 aa)) is disordered. The segment covering 39-55 (QKQVEQNTKKIEEHQIK) has biased composition (basic and acidic residues). The segment covering 63-85 (SNHNVNMSSQSNNSESTSTNNSS) has biased composition (low complexity). Positions 113-436 (FRVLKRLGYG…ATEIKQHPFF (324 aa)) constitute a Protein kinase domain. ATP contacts are provided by residues 119–127 (LGYGDIGSV) and Lys144. Catalysis depends on Asp240, which acts as the Proton acceptor. One can recognise an AGC-kinase C-terminal domain in the interval 437-499 (EGVNWALIRG…DPDYIVFEYF (63 aa)).

The protein belongs to the protein kinase superfamily. AGC Ser/Thr protein kinase family. In terms of assembly, interacts with PDPK1/PDK1. Post-translationally, autophosphorylated and phosphorylated by PDPK1/PDK1. In terms of tissue distribution, specifically expressed in root hair cells.

The catalysed reaction is L-seryl-[protein] + ATP = O-phospho-L-seryl-[protein] + ADP + H(+). The enzyme catalyses L-threonyl-[protein] + ATP = O-phospho-L-threonyl-[protein] + ADP + H(+). Its activity is regulated as follows. Activated by PDPK1/PDK1. Functionally, involved in root hair growth and morphogenesis. The protein is Serine/threonine-protein kinase RHS3 of Arabidopsis thaliana (Mouse-ear cress).